Consider the following 286-residue polypeptide: uncharacterized protein (286 aa).

2 disordered regions span residues 59–89 (PESA…PGAK) and 225–286 (RQRK…EDTR). Residues 69 to 85 (AEAESAGTAAATESHGA) show a composition bias toward low complexity.

This is an uncharacterized protein from Mus musculus (Mouse).